Reading from the N-terminus, the 209-residue chain is Large ribosomal subunit protein uL4 (209 aa).

The segment at 50 to 89 (MTKTKGLVSGGGKKPFKQKGTGGARQGSSRSILMPGGGTA) is disordered.

This sequence belongs to the universal ribosomal protein uL4 family. Part of the 50S ribosomal subunit.

One of the primary rRNA binding proteins, this protein initially binds near the 5'-end of the 23S rRNA. It is important during the early stages of 50S assembly. It makes multiple contacts with different domains of the 23S rRNA in the assembled 50S subunit and ribosome. In terms of biological role, forms part of the polypeptide exit tunnel. This Bdellovibrio bacteriovorus (strain ATCC 15356 / DSM 50701 / NCIMB 9529 / HD100) protein is Large ribosomal subunit protein uL4.